Here is a 955-residue protein sequence, read N- to C-terminus: Isoleucine--tRNA ligase (955 aa).

A 'HIGH' region motif is present at residues 58–68; sequence IYANGDIHIGH. Glu552 is a binding site for L-isoleucyl-5'-AMP. Residues 593–597 carry the 'KMSKS' region motif; it reads KMSKS. Residue Lys596 coordinates ATP. Zn(2+) is bound by residues Cys918, Cys921, Cys938, and Cys941.

Belongs to the class-I aminoacyl-tRNA synthetase family. IleS type 1 subfamily. In terms of assembly, monomer. The cofactor is Zn(2+).

It localises to the cytoplasm. The enzyme catalyses tRNA(Ile) + L-isoleucine + ATP = L-isoleucyl-tRNA(Ile) + AMP + diphosphate. In terms of biological role, catalyzes the attachment of isoleucine to tRNA(Ile). As IleRS can inadvertently accommodate and process structurally similar amino acids such as valine, to avoid such errors it has two additional distinct tRNA(Ile)-dependent editing activities. One activity is designated as 'pretransfer' editing and involves the hydrolysis of activated Val-AMP. The other activity is designated 'posttransfer' editing and involves deacylation of mischarged Val-tRNA(Ile). The polypeptide is Isoleucine--tRNA ligase (Vesicomyosocius okutanii subsp. Calyptogena okutanii (strain HA)).